Consider the following 185-residue polypeptide: Ribosome-recycling factor (185 aa).

The protein belongs to the RRF family.

The protein localises to the cytoplasm. Responsible for the release of ribosomes from messenger RNA at the termination of protein biosynthesis. May increase the efficiency of translation by recycling ribosomes from one round of translation to another. The protein is Ribosome-recycling factor of Mycobacterium leprae (strain Br4923).